A 194-amino-acid polypeptide reads, in one-letter code: Phosphoheptose isomerase (194 aa).

The SIS domain occupies 37–194; the sequence is IADTFKAGGK…LIEKEMVAQG (158 aa). 52–54 contributes to the substrate binding site; that stretch reads NGG. Zn(2+)-binding residues include histidine 61 and glutamate 65. Residues glutamate 65, 93-94, 119-121, serine 124, and glutamine 172 each bind substrate; these read ND and STS. 2 residues coordinate Zn(2+): glutamine 172 and histidine 180.

It belongs to the SIS family. GmhA subfamily. In terms of assembly, homotetramer. Zn(2+) serves as cofactor.

Its subcellular location is the cytoplasm. It carries out the reaction 2 D-sedoheptulose 7-phosphate = D-glycero-alpha-D-manno-heptose 7-phosphate + D-glycero-beta-D-manno-heptose 7-phosphate. It functions in the pathway carbohydrate biosynthesis; D-glycero-D-manno-heptose 7-phosphate biosynthesis; D-glycero-alpha-D-manno-heptose 7-phosphate and D-glycero-beta-D-manno-heptose 7-phosphate from sedoheptulose 7-phosphate: step 1/1. Its function is as follows. Catalyzes the isomerization of sedoheptulose 7-phosphate in D-glycero-D-manno-heptose 7-phosphate. The sequence is that of Phosphoheptose isomerase from Sodalis glossinidius (strain morsitans).